A 75-amino-acid polypeptide reads, in one-letter code: Brevinin-2HS2A (75 aa).

The first 22 residues, 1 to 22, serve as a signal peptide directing secretion; it reads MFTLKKPLLLLFFLGTISLSLC. Residues 23-40 constitute a propeptide that is removed on maturation; that stretch reads QEERDADEEEGEMIEEEV. Cysteines 69 and 75 form a disulfide.

Belongs to the frog skin active peptide (FSAP) family. Brevinin subfamily. Expressed by the skin glands.

It is found in the secreted. In terms of biological role, has antimicrobial activity against some Gram-positive bacteria and fungi but has no activity against a range of Gram-negative bacteria except P.faecalis. Has antimicrobial activity against the Gram-positive bacteria S.aureus ATCC 25923 (MIC=19 uM), B.licheniformis X39 (MIC=37.5 uM) and R.rhodochrous X15 (MIC=9.5 uM), is virtually inactive against E.faecium 091299 (MIC=150 uM) and S.carnosus KHS (MIC=150 uM) and inactive against E.faecalis 981. Active against the Gram-negative bacterium P.faecalis X29 (MIC=9.5 uM) and is inactive against E.coli, P.aeruginosa and S.typhi. Active against C.albicans ATCC 2002 (MIC=19 uM) and is also active against the slime mold 090223 (MIC=37.5 uM). Has extremely low hemolytic activity against human erythrocytes (LC(50)=300 uM). The protein is Brevinin-2HS2A of Odorrana hainanensis (Odor frog).